A 468-amino-acid polypeptide reads, in one-letter code: UDP-N-acetylmuramoylalanine--D-glutamate ligase (468 aa).

127–133 contributes to the ATP binding site; that stretch reads GTNGKTT.

It belongs to the MurCDEF family.

It localises to the cytoplasm. The enzyme catalyses UDP-N-acetyl-alpha-D-muramoyl-L-alanine + D-glutamate + ATP = UDP-N-acetyl-alpha-D-muramoyl-L-alanyl-D-glutamate + ADP + phosphate + H(+). The protein operates within cell wall biogenesis; peptidoglycan biosynthesis. Its function is as follows. Cell wall formation. Catalyzes the addition of glutamate to the nucleotide precursor UDP-N-acetylmuramoyl-L-alanine (UMA). The polypeptide is UDP-N-acetylmuramoylalanine--D-glutamate ligase (Prochlorococcus marinus (strain MIT 9312)).